Here is a 106-residue protein sequence, read N- to C-terminus: Urease subunit beta (106 aa).

Belongs to the urease beta subunit family. In terms of assembly, heterotrimer of UreA (gamma), UreB (beta) and UreC (alpha) subunits. Three heterotrimers associate to form the active enzyme.

The protein resides in the cytoplasm. The enzyme catalyses urea + 2 H2O + H(+) = hydrogencarbonate + 2 NH4(+). It participates in nitrogen metabolism; urea degradation; CO(2) and NH(3) from urea (urease route): step 1/1. The polypeptide is Urease subunit beta (Synechococcus sp. (strain CC9605)).